The following is a 241-amino-acid chain: Octanoyltransferase (241 aa).

The region spanning 43–228 (ADTPDEIWLV…RLTANLDGSP (186 aa)) is the BPL/LPL catalytic domain. Substrate-binding positions include 83–90 (RGGQITYH), 159–161 (ALG), and 172–174 (GVS). The Acyl-thioester intermediate role is filled by Cys-190.

The protein belongs to the LipB family.

Its subcellular location is the cytoplasm. The enzyme catalyses octanoyl-[ACP] + L-lysyl-[protein] = N(6)-octanoyl-L-lysyl-[protein] + holo-[ACP] + H(+). It functions in the pathway protein modification; protein lipoylation via endogenous pathway; protein N(6)-(lipoyl)lysine from octanoyl-[acyl-carrier-protein]: step 1/2. Functionally, catalyzes the transfer of endogenously produced octanoic acid from octanoyl-acyl-carrier-protein onto the lipoyl domains of lipoate-dependent enzymes. Lipoyl-ACP can also act as a substrate although octanoyl-ACP is likely to be the physiological substrate. The protein is Octanoyltransferase of Paraburkholderia phytofirmans (strain DSM 17436 / LMG 22146 / PsJN) (Burkholderia phytofirmans).